A 335-amino-acid chain; its full sequence is Tyrosine-protein phosphatase 1 (335 aa).

Residues 15 to 328 (LLGKFKFIQN…LFIYHAAKYL (314 aa)) form the Tyrosine-protein phosphatase domain. S83 is modified (phosphoserine; by CLK1). C252 functions as the Phosphocysteine intermediate in the catalytic mechanism.

This sequence belongs to the protein-tyrosine phosphatase family. Non-receptor class subfamily. In terms of processing, activated by phosphorylation at Ser-83.

It localises to the cytoplasm. The enzyme catalyses O-phospho-L-tyrosyl-[protein] + H2O = L-tyrosyl-[protein] + phosphate. In terms of biological role, is not required for vegetative growth. This chain is Tyrosine-protein phosphatase 1 (PTP1), found in Saccharomyces cerevisiae (strain ATCC 204508 / S288c) (Baker's yeast).